The sequence spans 464 residues: Argininosuccinate lyase (464 aa).

It belongs to the lyase 1 family. Argininosuccinate lyase subfamily.

The protein localises to the cytoplasm. It carries out the reaction 2-(N(omega)-L-arginino)succinate = fumarate + L-arginine. Its pathway is amino-acid biosynthesis; L-arginine biosynthesis; L-arginine from L-ornithine and carbamoyl phosphate: step 3/3. With respect to regulation, strongly inhibited by L-arginine. Inhibitory effects are lowered at pH 7.0 compared to those at pH 8.0. At 37 degrees Celsius and pH 7.5, activity decreases to 73% and 31% in the presence of 1 mM and 10 mM arginine, respectively. Activity also decreases to 84%, 93%, 82% and 85% in the presence of 10 mM sodium citrate, citrulline, asparatate and glutamate, respectively. Activity decreases to 96% in presence of 1 mM L-lysine. Its function is as follows. Catalyzes the last step of arginine biosynthesis, the conversion of argininosuccinate into L-arginine and fumarate. The protein is Argininosuccinate lyase of Arthrospira platensis (strain NIES-39 / UTEX 3086 / IAM M-135) (Spirulina platensis).